The following is a 727-amino-acid chain: Polyribonucleotide nucleotidyltransferase (727 aa).

2 residues coordinate Mg(2+): Asp-491 and Asp-497. In terms of domain architecture, KH spans 558 to 617 (PRIITASIHPDKIREVIGPGGKTIKKIIDETGVKIDIEDDGRVFISAVDGEAGENALKII). The region spanning 627 to 701 (GRIYNGRVTR…KQGRLNLSRK (75 aa)) is the S1 motif domain. The tract at residues 698–727 (LSRKEALPNPNPSSNPNPNGITANRNPRNS) is disordered. Residues 717–727 (GITANRNPRNS) show a composition bias toward polar residues.

This sequence belongs to the polyribonucleotide nucleotidyltransferase family. It depends on Mg(2+) as a cofactor.

The protein localises to the cytoplasm. The catalysed reaction is RNA(n+1) + phosphate = RNA(n) + a ribonucleoside 5'-diphosphate. Involved in mRNA degradation. Catalyzes the phosphorolysis of single-stranded polyribonucleotides processively in the 3'- to 5'-direction. The polypeptide is Polyribonucleotide nucleotidyltransferase (Desulfitobacterium hafniense (strain Y51)).